The primary structure comprises 254 residues: PF03932 family protein CutC (254 aa).

Belongs to the CutC family.

It localises to the cytoplasm. The polypeptide is PF03932 family protein CutC (Yersinia pseudotuberculosis serotype O:1b (strain IP 31758)).